The following is a 118-amino-acid chain: MRTTKGAARRQSKKRLFKRAKGFRGGRGNLTRTVKETLLRSGAFAFRDRRVRKREFRKLWIIRINAAVKQHGLRYSEFIHGLNKAGIQLDRKSLSEMAIHDAAGFKQVCDKVKETLAA.

This sequence belongs to the bacterial ribosomal protein bL20 family.

In terms of biological role, binds directly to 23S ribosomal RNA and is necessary for the in vitro assembly process of the 50S ribosomal subunit. It is not involved in the protein synthesizing functions of that subunit. This chain is Large ribosomal subunit protein bL20, found in Rhodopirellula baltica (strain DSM 10527 / NCIMB 13988 / SH1).